A 463-amino-acid polypeptide reads, in one-letter code: Type IV secretion system protein PtlD homolog (463 aa).

The N-terminal stretch at 1-24 is a signal peptide; sequence MAGLSRILLSCTLACLLAGQAAQA. 5 helical membrane passes run 118-138, 232-252, 253-273, 294-314, and 333-353; these read LQPL…YALL, WLLC…LAAS, LLIV…LFLV, ALVF…VLAG, and MLAA…VPLA. Low complexity predominate over residues 376–410; sequence AHRQAAARQYAPRPAAAAAAAGPHQAGTYAASATP. Positions 376–463 are disordered; that stretch reads AHRQAAARQY…RVLPRKPNLP (88 aa). Pro residues predominate over residues 411–420; the sequence is APAPARPAPS. Over residues 441 to 455 the composition is skewed to basic and acidic residues; that stretch reads VRRDDRPAPAPDRRV.

The protein resides in the cell membrane. The sequence is that of Type IV secretion system protein PtlD homolog (ptlD) from Bordetella parapertussis (strain 12822 / ATCC BAA-587 / NCTC 13253).